The sequence spans 401 residues: Argininosuccinate synthase (401 aa).

8–16 lines the ATP pocket; it reads AYSGGLDTT. Y87 serves as a coordination point for L-citrulline. G117 contributes to the ATP binding site. L-aspartate contacts are provided by T119, N123, and D124. N123 provides a ligand contact to L-citrulline. R127, S175, E259, and Y271 together coordinate L-citrulline.

Belongs to the argininosuccinate synthase family. Type 1 subfamily. In terms of assembly, homotetramer.

The protein resides in the cytoplasm. It catalyses the reaction L-citrulline + L-aspartate + ATP = 2-(N(omega)-L-arginino)succinate + AMP + diphosphate + H(+). Its pathway is amino-acid biosynthesis; L-arginine biosynthesis; L-arginine from L-ornithine and carbamoyl phosphate: step 2/3. This Corynebacterium glutamicum (strain ATCC 13032 / DSM 20300 / JCM 1318 / BCRC 11384 / CCUG 27702 / LMG 3730 / NBRC 12168 / NCIMB 10025 / NRRL B-2784 / 534) protein is Argininosuccinate synthase.